Consider the following 326-residue polypeptide: Elongation factor Ts (326 aa).

An involved in Mg(2+) ion dislocation from EF-Tu region spans residues 80-83 (TDFV).

The protein belongs to the EF-Ts family.

Its subcellular location is the cytoplasm. Functionally, associates with the EF-Tu.GDP complex and induces the exchange of GDP to GTP. It remains bound to the aminoacyl-tRNA.EF-Tu.GTP complex up to the GTP hydrolysis stage on the ribosome. The chain is Elongation factor Ts from Rhodopirellula baltica (strain DSM 10527 / NCIMB 13988 / SH1).